Reading from the N-terminus, the 875-residue chain is Importin subunit beta-1 (875 aa).

N-acetylmethionine is present on methionine 1. HEAT repeat units follow at residues 2-31 (ELIT…AAVE), 33-64 (LPTF…IRLL), 84-122 (ANAR…EIPV), 128-159 (LIPQ…ICQD), and 169-201 (SNEI…LNSL). Residue serine 12 is modified to Phosphoserine. One can recognise an Importin N-terminal domain in the interval 21 to 100 (AQKFLERAAV…KNYVLQTLGT (80 aa)). Lysine 210 is modified (N6-acetyllysine). 14 HEAT repeats span residues 211–246 (ESER…IMSL), 252–301 (ETYM…EAAE), 313–359 (YAKG…TCCE), 363–393 (VPHV…GSIL), 401–437 (LKPL…ICEL), 448–484 (LAPL…YEAA), 499–536 (SSSF…EIVK), 543–591 (YPAV…QNVL), 599–638 (ALQI…VEVL), 643–680 (LKYM…CRAL), 685–723 (LPFC…TLAI), 731–775 (LEVV…VQGL), 785–828 (DVML…CTAF), and 830–872 (KDVL…RKLK). The segment at 285 to 461 (VCDEEMDLAI…LQCLIEGLSA (177 aa)) is essential for high affinity interaction with RPL23A. The tract at residues 328-341 (TLTKQDENDDDDDW) is IAB-binding. The ran-GTP binding stretch occupies residues 333-418 (DENDDDDDWN…MPTLIELMKD (86 aa)). Lysine 834 and lysine 866 each carry N6-acetyllysine.

The protein belongs to the importin beta family. Importin beta-1 subfamily. In terms of assembly, forms a complex with an importin alpha subunit. Interacts with XPO1. Forms a heterodimer with IPO7. The KPNB1/IPO7 heterodimer interacts with H1 histone. Interacts with SNUPN. Interacts with H2A, H2B, H3 and H4 histones. Component of an import snRNP complex composed of KPNB1, SNUPN, SMN1 and ZNF259. Component of a nuclear export receptor complex composed of KPNB1, Ran, SNUPN and XPO1. Interacts with SRY. Interacts with PRKCI/atypical protein kinase C iota. Interacts with KPNA2. Interacts with KPNA7. Interacts with SNAI1 (via zinc fingers) and SNAI2 (via zinc fingers). Interacts with SLC35G1 and STIM1. Interacts with DCAF8. Interacts with RAN. Interacts with NUMA1 (via C-terminus); this interaction is inhibited by RanGTP. Interacts with ZBED1/hDREF; required for nuclear import of ZBED1/hDREF. Interacts with SRP19. Interacts with RPL23A (via BIB domain), RPS7 and RPL5. In terms of processing, mono-ADP-ribosylated by PARP16.

The protein resides in the cytoplasm. Its subcellular location is the nucleus envelope. In terms of biological role, functions in nuclear protein import, either in association with an adapter protein, like an importin-alpha subunit, which binds to nuclear localization signals (NLS) in cargo substrates, or by acting as autonomous nuclear transport receptor. Acting autonomously, serves itself as NLS receptor. Docking of the importin/substrate complex to the nuclear pore complex (NPC) is mediated by KPNB1 through binding to nucleoporin FxFG repeats and the complex is subsequently translocated through the pore by an energy requiring, Ran-dependent mechanism. At the nucleoplasmic side of the NPC, Ran binds to importin-beta and the three components separate and importin-alpha and -beta are re-exported from the nucleus to the cytoplasm where GTP hydrolysis releases Ran from importin. The directionality of nuclear import is thought to be conferred by an asymmetric distribution of the GTP- and GDP-bound forms of Ran between the cytoplasm and nucleus. Mediates autonomously the nuclear import of ribosomal proteins RPL23A, RPS7 and RPL5. In association with IPO7, mediates the nuclear import of H1 histone. In vitro, mediates nuclear import of H2A, H2B, H3 and H4 histones. Imports MRTFA, SNAI1 and PRKCI into the nucleus. In Rattus norvegicus (Rat), this protein is Importin subunit beta-1 (Kpnb1).